A 136-amino-acid polypeptide reads, in one-letter code: ATP synthase F(0) complex subunit C1, mitochondrial (136 aa).

Residues 1-61 constitute a mitochondrion transit peptide; the sequence is MQTTKALLIS…REFQTSVISR (61 aa). The helical transmembrane segment at 77-97 threads the bilayer; sequence VGVAGSGAGIGTVFGSLIIGY. Position 104 is an N6,N6,N6-trimethyllysine (Lys104). Residues 112 to 132 traverse the membrane as a helical segment; that stretch reads ILGFALSEAMGLFCLMVAFLI.

The protein belongs to the ATPase C chain family. Homooctamer; the c-ring consists of eight c subunits forming a circle, and each subunit adopts a hairpin shape. Component of the ATP synthase complex composed at least of ATP5F1A/subunit alpha, ATP5F1B/subunit beta, ATP5MC1/subunit c (homooctomer), MT-ATP6/subunit a, MT-ATP8/subunit 8, ATP5ME/subunit e, ATP5MF/subunit f, ATP5MG/subunit g, ATP5MK/subunit k, ATP5MJ/subunit j, ATP5F1C/subunit gamma, ATP5F1D/subunit delta, ATP5F1E/subunit epsilon, ATP5PF/subunit F6, ATP5PB/subunit b, ATP5PD/subunit d, ATP5PO/subunit OSCP. ATP synthase complex consists of a soluble F(1) head domain (subunits alpha(3) and beta(3)) - the catalytic core - and a membrane F(0) domain - the membrane proton channel (subunits c, a, 8, e, f, g, k and j). These two domains are linked by a central stalk (subunits gamma, delta, and epsilon) rotating inside the F1 region and a stationary peripheral stalk (subunits F6, b, d, and OSCP). Interacts with TMEM70 (homooligomer form); this interaction facilitates the oligomer formation of subunit c/ATP5MC1 (c-ring) and the c-ring membrane insertion and also protects ATP5MC1 against intramitochondrial proteolysis. In terms of processing, trimethylated by ATPSCKMT at Lys-104. Methylation is required for proper incorporation of the C subunit into the ATP synthase complex and mitochondrial respiration.

The protein resides in the mitochondrion membrane. The enzyme catalyses H(+)(in) = H(+)(out). Its function is as follows. Subunit c, of the mitochondrial membrane ATP synthase complex (F(1)F(0) ATP synthase or Complex V) that produces ATP from ADP in the presence of a proton gradient across the membrane which is generated by electron transport complexes of the respiratory chain. ATP synthase complex consist of a soluble F(1) head domain - the catalytic core - and a membrane F(1) domain - the membrane proton channel. These two domains are linked by a central stalk rotating inside the F(1) region and a stationary peripheral stalk. During catalysis, ATP synthesis in the catalytic domain of F(1) is coupled via a rotary mechanism of the central stalk subunits to proton translocation. With the subunit a (MT-ATP6), forms the proton-conducting channel in the F(0) domain, that contains two crucial half-channels (inlet and outlet) that facilitate proton movement from the mitochondrial intermembrane space (IMS) into the matrix. Protons are taken up via the inlet half-channel and released through the outlet half-channel, following a Grotthuss mechanism. This is ATP synthase F(0) complex subunit C1, mitochondrial from Rattus norvegicus (Rat).